Consider the following 353-residue polypeptide: MAVSAIGFEGFEKRLEISFSDPGLFSDPQGRGLRSLTKSQLDEILAPAECTIVSSLANEDVDSYVLSESSLFVYAYKLIIKTCGTTKLLLSIPPILKLADSISLNVRSVRYTRGSFIFPGAQSFPHRHFSEEVAVLDGFFGKLGSGSMAYILGGSDEAQNWHIYCASSDSVSPEGSVYTLEMCMTGLDREKASVFFKEQTGSAAEMTVNSGIRKILRNSEICDFDFEPCGYSMNSVEGSAVSTIHITPEDGFSYASFETAGYDLKAINLNEMVMRVLACFQPTEFSVAVHVDNASKSFEQGCLLDVKGYCCEEKSHQGLGMSGSVVYQKFLKTSYCGSPRSTLKCWKDEDEEE.

Catalysis depends on residues Glu-9 and Glu-12. Ser-69 acts as the Schiff-base intermediate with substrate; via pyruvic acid in catalysis. A Pyruvic acid (Ser); by autocatalysis modification is found at Ser-69. Cys-83 acts as the Proton donor; for catalytic activity in catalysis. Catalysis depends on proton acceptor; for processing activity residues Ser-232 and His-245.

The protein belongs to the eukaryotic AdoMetDC family. Pyruvate is required as a cofactor. Post-translationally, is synthesized initially as an inactive proenzyme. Formation of the active enzyme involves a self-maturation process in which the active site pyruvoyl group is generated from an internal serine residue via an autocatalytic post-translational modification. Two non-identical subunits are generated from the proenzyme in this reaction, and the pyruvate is formed at the N-terminus of the alpha chain, which is derived from the carboxyl end of the proenzyme. The post-translation cleavage follows an unusual pathway, termed non-hydrolytic serinolysis, in which the side chain hydroxyl group of the serine supplies its oxygen atom to form the C-terminus of the beta chain, while the remainder of the serine residue undergoes an oxidative deamination to produce ammonia and the pyruvoyl group blocking the N-terminus of the alpha chain.

The enzyme catalyses S-adenosyl-L-methionine + H(+) = S-adenosyl 3-(methylsulfanyl)propylamine + CO2. It participates in amine and polyamine biosynthesis; S-adenosylmethioninamine biosynthesis; S-adenosylmethioninamine from S-adenosyl-L-methionine: step 1/1. The protein is S-adenosylmethionine decarboxylase proenzyme (SAMDC) of Pisum sativum (Garden pea).